A 270-amino-acid polypeptide reads, in one-letter code: MMNFLRNRLVVLGLVLLATVLLYLLLPSMRQGSMEPSLEVQQRMGLMAATPPPPPPPSSVNITVRTGQLPGDPPLFFREALPVDSAGRQILPRLQMVLLHGQAFTSKTWEELGTLSLLASSGYQALALDLPGYGNSPDSESVKSDQSRVDLLKRFLEALGVRAPVLLSPSMSGHYALPFLQRHSAQLHGFVPIAPVGTRGITPQQYHDIQTPTLIIYGELDTNLGAQSHKNLIQLPNHTVVKLAGARHACYMDKPREFHRALLDFLSKLD.

Residues 9-29 (LVVLGLVLLATVLLYLLLPSM) form a helical; Signal-anchor for type II membrane protein membrane-spanning segment. A glycan (N-linked (GlcNAc...) asparagine) is linked at Asn-61. Residues Ser-170 and Asp-221 each act as charge relay system in the active site. The N-linked (GlcNAc...) asparagine glycan is linked to Asn-237. His-248 acts as the Charge relay system in catalysis.

Belongs to the AB hydrolase superfamily. ABHD14 family.

Its subcellular location is the cytoplasm. The protein localises to the membrane. Functionally, possible role in granule neuron development. This Danio rerio (Zebrafish) protein is Protein ABHD14A.